The chain runs to 165 residues: Protein SprT (165 aa).

Positions 20 to 163 constitute a SprT-like domain; that stretch reads ENLAQANLKL…RCVHCGEPLV (144 aa). Residue histidine 78 participates in Zn(2+) binding. Glutamate 79 is an active-site residue. A Zn(2+)-binding site is contributed by histidine 82.

The protein belongs to the SprT family. It depends on Zn(2+) as a cofactor.

Its subcellular location is the cytoplasm. In Salmonella arizonae (strain ATCC BAA-731 / CDC346-86 / RSK2980), this protein is Protein SprT.